The sequence spans 247 residues: Orotidine 5'-phosphate decarboxylase (247 aa).

Substrate contacts are provided by residues Asp-22, Lys-44, 71-80, Thr-131, Arg-192, Gln-201, Gly-221, and Arg-222; that span reads DLKFHDIPNT. The Proton donor role is filled by Lys-73.

Belongs to the OMP decarboxylase family. Type 1 subfamily. In terms of assembly, homodimer.

It catalyses the reaction orotidine 5'-phosphate + H(+) = UMP + CO2. It functions in the pathway pyrimidine metabolism; UMP biosynthesis via de novo pathway; UMP from orotate: step 2/2. Functionally, catalyzes the decarboxylation of orotidine 5'-monophosphate (OMP) to uridine 5'-monophosphate (UMP). The sequence is that of Orotidine 5'-phosphate decarboxylase from Pectobacterium carotovorum subsp. carotovorum (strain PC1).